We begin with the raw amino-acid sequence, 2300 residues long: Protein Ycf2 (2300 aa).

1642–1649 provides a ligand contact to ATP; it reads GSIGTGRS.

This sequence belongs to the Ycf2 family.

The protein resides in the plastid. It is found in the chloroplast stroma. Probable ATPase of unknown function. Its presence in a non-photosynthetic plant (Epifagus virginiana) and experiments in tobacco indicate that it has an essential function which is probably not related to photosynthesis. This chain is Protein Ycf2, found in Vitis vinifera (Grape).